An 82-amino-acid chain; its full sequence is MSDINQNLARRPFNRRRKTCPFSGTNVAKIDYKDIKLLQRYISERGKIVPSRITAVSQKKQRELANAIKRARFLGLLPYVVK.

It belongs to the bacterial ribosomal protein bS18 family. Part of the 30S ribosomal subunit. Forms a tight heterodimer with protein bS6.

Binds as a heterodimer with protein bS6 to the central domain of the 16S rRNA, where it helps stabilize the platform of the 30S subunit. The chain is Small ribosomal subunit protein bS18 from Bartonella bacilliformis (strain ATCC 35685 / KC583 / Herrer 020/F12,63).